Reading from the N-terminus, the 62-residue chain is MARYRRHSRSRSRSRYRRRRRRRSRHRNRRRTYRRSRRHSRRRRGRRRGYSRRRYSRRGRRR.

Positions M1–R62 are disordered.

Belongs to the protamine P1 family. In terms of tissue distribution, testis.

The protein resides in the nucleus. It localises to the chromosome. Its function is as follows. Protamines substitute for histones in the chromatin of sperm during the haploid phase of spermatogenesis. They compact sperm DNA into a highly condensed, stable and inactive complex. This is Sperm protamine P1 (PRM1) from Pseudantechinus bilarni (Sandstone dibbler).